We begin with the raw amino-acid sequence, 101 residues long: Small ribosomal subunit protein uS14 (101 aa).

This sequence belongs to the universal ribosomal protein uS14 family. Part of the 30S ribosomal subunit. Contacts proteins S3 and S10.

Functionally, binds 16S rRNA, required for the assembly of 30S particles and may also be responsible for determining the conformation of the 16S rRNA at the A site. The protein is Small ribosomal subunit protein uS14 of Gluconobacter oxydans (strain 621H) (Gluconobacter suboxydans).